The following is a 349-amino-acid chain: MATSAISKLLVSDFASSVHIPSNYVRPISDRPNLSEVESSGDSIPLIDLRDLHGPNRAVIVQQLASACSTYGFFQIKNHGVPDTTVNKMQTVAREFFHQPESERVKHYSADPTKTTRLSTSFNVGADKVLNWRDFLRLHCFPIEDFIEEWPSSPISFREVTAEYATSVRALVLRLLEAISESLGLESDHISNILGKHAQHMAFNYYPPCPEPELTYGLPGHKDPTVITVLLQDQVSGLQVFKDDKWVAVSPIPNTFIVNIGDQMQVISNDKYKSVLHRAVVNTENERLSIPTFYFPSTDAVIGPAHELVNEQDSLAIYRTYPFVEYWDKFWNRSLATASCLDAFKAPTT.

Positions 197-296 constitute a Fe2OG dioxygenase domain; the sequence is HAQHMAFNYY…RLSIPTFYFP (100 aa). Y206 serves as a coordination point for 2-oxoglutarate. Residues H221, D223, and H277 each contribute to the Fe cation site. 2 residues coordinate 2-oxoglutarate: R287 and S289.

The protein belongs to the iron/ascorbate-dependent oxidoreductase family. L-ascorbate is required as a cofactor. Requires Fe(2+) as cofactor.

It carries out the reaction salicylate + NADH + O2 + H(+) = 2,3-dihydroxybenzoate + NAD(+) + H2O. Its function is as follows. Converts salicylic acid (SA) to both 2,3-dihydroxybenzoic acid (2,3-DHBA) and 2,5-DHBA in vitro but only 2,3-DHBA in vivo. Component of a negative feedback regulation system of SA levels during senescence. Regulates both onset and progression of leaf senescence. Negative regulator of defense against Hyaloperonospora arabidopsidis. (Microbial infection) Confers susceptibility to the downy mildew pathogen Hyaloperonospora arabidopsidis. This chain is Protein DMR6-LIKE OXYGENASE 1, found in Arabidopsis thaliana (Mouse-ear cress).